A 212-amino-acid chain; its full sequence is Adenylate kinase (212 aa).

ATP is bound at residue 14–19 (GSGKGT). The tract at residues 34–63 (STGDLFRKKISEDSQFAAQIQNYLSSGSYV) is NMP. AMP contacts are provided by residues T35, R40, 61–63 (SYV), 89–92 (GYPR), and Q96. The segment at 126-163 (QRLFCQKCQKSYNLLLAKPKNGLKCDLDNTDLITRNDD) is LID. Residue R127 coordinates ATP. Zn(2+)-binding residues include C130 and C133. Position 136–137 (136–137 (SY)) interacts with ATP. Zn(2+)-binding residues include C150 and D153. AMP contacts are provided by R160 and R171. Q199 lines the ATP pocket.

It belongs to the adenylate kinase family. As to quaternary structure, monomer.

It is found in the cytoplasm. The catalysed reaction is AMP + ATP = 2 ADP. It participates in purine metabolism; AMP biosynthesis via salvage pathway; AMP from ADP: step 1/1. In terms of biological role, catalyzes the reversible transfer of the terminal phosphate group between ATP and AMP. Plays an important role in cellular energy homeostasis and in adenine nucleotide metabolism. This is Adenylate kinase from Mesomycoplasma hyopneumoniae (strain 7448) (Mycoplasma hyopneumoniae).